The chain runs to 312 residues: UDP-N-acetylenolpyruvoylglucosamine reductase (312 aa).

In terms of domain architecture, FAD-binding PCMH-type spans 24 to 206 (GIGGPADLFA…SADILKVRNE (183 aa)). The active site involves arginine 166. Serine 217 acts as the Proton donor in catalysis. Glutamate 307 is a catalytic residue.

The protein belongs to the MurB family. The cofactor is FAD.

It is found in the cytoplasm. The enzyme catalyses UDP-N-acetyl-alpha-D-muramate + NADP(+) = UDP-N-acetyl-3-O-(1-carboxyvinyl)-alpha-D-glucosamine + NADPH + H(+). It functions in the pathway cell wall biogenesis; peptidoglycan biosynthesis. Cell wall formation. This chain is UDP-N-acetylenolpyruvoylglucosamine reductase, found in Solibacter usitatus (strain Ellin6076).